We begin with the raw amino-acid sequence, 471 residues long: Putative multidrug resistance protein MdtD (471 aa).

The Periplasmic segment spans residues 1–11 (MTDLPDSTRWQ). The helical transmembrane segment at 12 to 32 (LWIVAFGFFMQSLDTTIVNTA) threads the bilayer. Residues 33–48 (LPSMAQSLGESPLHMH) lie on the Cytoplasmic side of the membrane. Residues 49–69 (MVIVSYVLTVAVMLPASGWLA) traverse the membrane as a helical segment. The Periplasmic segment spans residues 70 to 76 (DKVGVRN). A helical transmembrane segment spans residues 77–97 (IFFTAIVLFTLGSLFCALSGT). The Cytoplasmic segment spans residues 98–101 (LNEL). The helical transmembrane segment at 102–124 (LLARALQGVGGAMMVPVGRLTVM) threads the bilayer. Topologically, residues 125 to 137 (KIVPREQYMAAMT) are periplasmic. The chain crosses the membrane as a helical span at residues 138–158 (FVTLPGQVGPLLGPALGGLLV). The Cytoplasmic portion of the chain corresponds to 159-164 (EYASWH). A helical transmembrane segment spans residues 165–185 (WIFLINIPVGIIGAIATLLLM). Over 186 to 196 (PNYTMQTWRFD) the chain is Periplasmic. The helical transmembrane segment at 197–217 (LSGFLLLAVGMAVLTLALDGS) threads the bilayer. Over 218-224 (KGTGLSP) the chain is Cytoplasmic. A helical transmembrane segment spans residues 225 to 245 (LAIAGLVAVGVVALVLYLLHA). Residues 246-262 (RNNNRALFSLKLFRTRT) are Periplasmic-facing. The chain crosses the membrane as a helical span at residues 263 to 283 (FSLGLAGSFAGRIGSGMLPFM). Over 284 to 285 (TP) the chain is Cytoplasmic. A helical transmembrane segment spans residues 286–306 (VFLQIGLGFSPFHAGLMMIPM). The Periplasmic segment spans residues 307-341 (VLGSMGMKRIVVQVVNRFGYRRVLVATTLGLSLVT). A helical membrane pass occupies residues 342 to 362 (LLFMTTALLGWYYVLPFVLFL). At 363 to 395 (QGMVNSTRFSSMNTLTLKDLPDNLASSGNSLLS) the chain is on the cytoplasmic side. The helical transmembrane segment at 396–416 (MIMQLSMSIGVTIAGLLLGLF) threads the bilayer. Residues 417–430 (GSQHVSVDSGTTQT) lie on the Periplasmic side of the membrane. A helical transmembrane segment spans residues 431 to 451 (VFMYTWLSMALIIALPAFIFA). Residues 452-471 (RVPNDTHQNVAISRRKRSAQ) lie on the Cytoplasmic side of the membrane.

This sequence belongs to the major facilitator superfamily. TCR/Tet family.

The protein resides in the cell inner membrane. The polypeptide is Putative multidrug resistance protein MdtD (Shigella boydii serotype 4 (strain Sb227)).